The primary structure comprises 149 residues: 3-dehydroquinate dehydratase (149 aa).

Tyrosine 23 serves as the catalytic Proton acceptor. The substrate site is built by asparagine 74, histidine 80, and aspartate 87. Histidine 100 acts as the Proton donor in catalysis. Residues 101-102 (LS) and arginine 111 each bind substrate.

It belongs to the type-II 3-dehydroquinase family. As to quaternary structure, homododecamer.

The enzyme catalyses 3-dehydroquinate = 3-dehydroshikimate + H2O. It participates in metabolic intermediate biosynthesis; chorismate biosynthesis; chorismate from D-erythrose 4-phosphate and phosphoenolpyruvate: step 3/7. Its function is as follows. Catalyzes a trans-dehydration via an enolate intermediate. The protein is 3-dehydroquinate dehydratase of Ruegeria pomeroyi (strain ATCC 700808 / DSM 15171 / DSS-3) (Silicibacter pomeroyi).